Consider the following 427-residue polypeptide: Zinc finger protein 2 (427 aa).

In terms of domain architecture, KRAB spans 14-85; it reads VTFEDVAVTF…GFHGSEEKTW (72 aa). The tract at residues 111 to 142 is disordered; the sequence is HRKQSSLCPKREIQTLTGGPEPEKESPKARTC. 8 consecutive C2H2-type zinc fingers follow at residues 169–191, 197–219, 225–247, 253–275, 281–303, 309–331, 337–359, and 365–387; these read QECS…QRTH, YDCP…LMFH, YECD…QRIH, FKCN…QRIH, YECQ…LLTH, YECR…QKVH, YQCS…QKIH, and YECG…QRVH. The segment at 393–415 adopts a C2H2-type 9; degenerate zinc-finger fold; the sequence is FECSVCGKEFSSKSSIIQHQRRY.

This sequence belongs to the krueppel C2H2-type zinc-finger protein family.

It localises to the nucleus. Its function is as follows. May be involved in transcriptional regulation. The sequence is that of Zinc finger protein 2 from Mus musculus (Mouse).